A 392-amino-acid chain; its full sequence is Formate-dependent phosphoribosylglycinamide formyltransferase (392 aa).

N(1)-(5-phospho-beta-D-ribosyl)glycinamide contacts are provided by residues 22–23 (EL) and Glu-82. ATP is bound by residues Arg-114, Lys-155, 160 to 165 (SSGKGQ), 195 to 198 (EGVV), and Glu-203. Positions 119-308 (RLAAEELGLP…EFALHVRAFL (190 aa)) constitute an ATP-grasp domain. Residues Glu-267 and Glu-279 each coordinate Mg(2+). N(1)-(5-phospho-beta-D-ribosyl)glycinamide-binding positions include Asp-286, Lys-355, and 362-363 (RR).

This sequence belongs to the PurK/PurT family. As to quaternary structure, homodimer.

The catalysed reaction is N(1)-(5-phospho-beta-D-ribosyl)glycinamide + formate + ATP = N(2)-formyl-N(1)-(5-phospho-beta-D-ribosyl)glycinamide + ADP + phosphate + H(+). Its pathway is purine metabolism; IMP biosynthesis via de novo pathway; N(2)-formyl-N(1)-(5-phospho-D-ribosyl)glycinamide from N(1)-(5-phospho-D-ribosyl)glycinamide (formate route): step 1/1. Involved in the de novo purine biosynthesis. Catalyzes the transfer of formate to 5-phospho-ribosyl-glycinamide (GAR), producing 5-phospho-ribosyl-N-formylglycinamide (FGAR). Formate is provided by PurU via hydrolysis of 10-formyl-tetrahydrofolate. The polypeptide is Formate-dependent phosphoribosylglycinamide formyltransferase (Salmonella dublin (strain CT_02021853)).